The chain runs to 488 residues: GTPase Der (488 aa).

2 consecutive EngA-type G domains span residues 3–166 (PVVA…AEAM) and 199–372 (IKLA…DSAT). GTP contacts are provided by residues 9–16 (GRPNVGKS), 56–60 (DTGGI), 118–121 (NKVD), 205–212 (GKPNVGKS), 252–256 (DTAGV), and 317–320 (NKWD). Residues 373–457 (RRVSTSMLTR…PIQLRFQEGD (85 aa)) form the KH-like domain. Residues 460–488 (FENKTEKLTMSQERRRKRAQSHIKDRKTK) form a disordered region. A compositionally biased stretch (basic residues) spans 473–488 (RRRKRAQSHIKDRKTK).

Belongs to the TRAFAC class TrmE-Era-EngA-EngB-Septin-like GTPase superfamily. EngA (Der) GTPase family. As to quaternary structure, associates with the 50S ribosomal subunit.

GTPase that plays an essential role in the late steps of ribosome biogenesis. The sequence is that of GTPase Der from Shewanella baltica (strain OS155 / ATCC BAA-1091).